We begin with the raw amino-acid sequence, 165 residues long: Endoribonuclease YbeY (165 aa).

Zn(2+)-binding residues include histidine 119, histidine 123, and histidine 129.

This sequence belongs to the endoribonuclease YbeY family. Requires Zn(2+) as cofactor.

The protein resides in the cytoplasm. Single strand-specific metallo-endoribonuclease involved in late-stage 70S ribosome quality control and in maturation of the 3' terminus of the 16S rRNA. In Streptomyces coelicolor (strain ATCC BAA-471 / A3(2) / M145), this protein is Endoribonuclease YbeY.